The primary structure comprises 263 residues: Putative S-adenosyl-L-methionine-dependent methyltransferase Mkms_0098 (263 aa).

S-adenosyl-L-methionine contacts are provided by residues Asp-121 and 150–151; that span reads ES.

It belongs to the UPF0677 family.

Its function is as follows. Exhibits S-adenosyl-L-methionine-dependent methyltransferase activity. In Mycobacterium sp. (strain KMS), this protein is Putative S-adenosyl-L-methionine-dependent methyltransferase Mkms_0098.